We begin with the raw amino-acid sequence, 115 residues long: Large ribosomal subunit protein bL20c (115 aa).

This sequence belongs to the bacterial ribosomal protein bL20 family.

The protein localises to the plastid. It is found in the chloroplast. In terms of biological role, binds directly to 23S ribosomal RNA and is necessary for the in vitro assembly process of the 50S ribosomal subunit. It is not involved in the protein synthesizing functions of that subunit. The chain is Large ribosomal subunit protein bL20c from Physcomitrium patens (Spreading-leaved earth moss).